A 600-amino-acid polypeptide reads, in one-letter code: Pyranose dehydrogenase 3 (600 aa).

The N-terminal stretch at 1–25 (MLPRVARLNTHLVSLALLGFQITYG) is a signal peptide. Residues asparagine 99 and asparagine 114 are each glycosylated (N-linked (GlcNAc...) asparagine). Tele-8alpha-FAD histidine is present on histidine 127. 6 N-linked (GlcNAc...) asparagine glycosylation sites follow: asparagine 173, asparagine 199, asparagine 275, asparagine 342, asparagine 399, and asparagine 507. The active-site Proton acceptor is the histidine 535. N-linked (GlcNAc...) asparagine glycosylation is present at asparagine 546. Histidine 579 is an active-site residue.

Belongs to the GMC oxidoreductase family. Monomer. FAD is required as a cofactor. N-glycosylated.

It localises to the secreted. The enzyme catalyses pyranose + acceptor = pyranos-2-ulose + reduced acceptor.. The catalysed reaction is pyranose + acceptor = pyranos-3-ulose + reduced acceptor.. It catalyses the reaction pyranose + acceptor = pyranos-2,3-diulose + reduced acceptor.. It carries out the reaction a pyranoside + acceptor = a pyranosid-3-ulose + reduced acceptor.. The enzyme catalyses a pyranoside + acceptor = a pyranosid-3,4-diulose + reduced acceptor.. Functionally, catalyzes the single-oxidation or sequential double oxidation reaction of carbohydrates primarily at carbon-2 and/or carbon-3 with the concomitant reduction of the flavin. The enzyme exhibits a broad sugar substrate specificity, oxidizing different aldopyranoses to the corresponding C-1, C-2, C-3 or C-1,2, C-2,3 and C-3,4 (di)dehydro sugars with substrate-specific regioselectivity. Accepts only a narrow range of electron acceptors such as substituted benzoquinones and complexed metal ions and reacts extremely slowly with O(2) as acceptor. May play a role in the natural recycling of plant matter by oxidizing all major monosaccharides in lignocellulose and by reducing quinone compounds or reactive radical species generated during lignin depolymerization. The polypeptide is Pyranose dehydrogenase 3 (Leucoagaricus meleagris (Western flat-topped agaric)).